Consider the following 328-residue polypeptide: Malate dehydrogenase (328 aa).

NAD(+) is bound at residue 12-18; sequence GAAGQIA. Arg-93 and Arg-99 together coordinate substrate. NAD(+) is bound by residues Asn-106, Gln-113, and 130–132; that span reads VGN. Substrate-binding residues include Asn-132 and Arg-163. The active-site Proton acceptor is His-188.

The protein belongs to the LDH/MDH superfamily. MDH type 2 family.

The enzyme catalyses (S)-malate + NAD(+) = oxaloacetate + NADH + H(+). Its function is as follows. Catalyzes the reversible oxidation of malate to oxaloacetate. This Burkholderia cenocepacia (strain ATCC BAA-245 / DSM 16553 / LMG 16656 / NCTC 13227 / J2315 / CF5610) (Burkholderia cepacia (strain J2315)) protein is Malate dehydrogenase.